The following is a 221-amino-acid chain: Large ribosomal subunit protein uL3 (221 aa).

It belongs to the universal ribosomal protein uL3 family. As to quaternary structure, part of the 50S ribosomal subunit. Forms a cluster with proteins L14 and L19.

Functionally, one of the primary rRNA binding proteins, it binds directly near the 3'-end of the 23S rRNA, where it nucleates assembly of the 50S subunit. In Chlamydia felis (strain Fe/C-56) (Chlamydophila felis), this protein is Large ribosomal subunit protein uL3.